A 678-amino-acid polypeptide reads, in one-letter code: Electrogenic aspartate/glutamate antiporter SLC25A12, mitochondrial (678 aa).

A2 is modified (N-acetylalanine). A regulatory N-terminal domain region spans residues 2 to 294 (AVKVQTTKRG…TLADIERIAP (293 aa)). Residues 2–329 (AVKVQTTKRG…WLQIAESAYR (328 aa)) are Mitochondrial intermembrane-facing. Residues D65, T67, D69, L71, and E76 each contribute to the Ca(2+) site. EF-hand domains are found at residues 65-76 (DQTKDGLISYQE), 86-121 (APDS…TIIH), 125-155 (PFNW…QFLQ), and 157-192 (LQLE…IRSH). Residues 295–310 (LAEGALPYNLAELQRQ) are linker loop domain. The carrier domain stretch occupies residues 320–612 (WLQIAESAYR…RWFYIDFGGL (293 aa)). Solcar repeat units follow at residues 324-416 (AESA…VRDK), 424-508 (VPLP…CKLL), and 516-604 (VGGL…LQRW). Residues 330–347 (FTLGSVAGAVGATAVYPI) traverse the membrane as a helical segment. Residues 348–390 (DLVKTRMQNQRGSGSVVGELMYKNSFDCFKKVLRYEGFFGLYR) lie on the Mitochondrial matrix side of the membrane. Residues 391 to 410 (GLIPQLIGVAPEKAIKLTVN) form a helical membrane-spanning segment. The Mitochondrial intermembrane portion of the chain corresponds to 411-433 (DFVRDKFTRRDGSVPLPAEVLAG). The helical transmembrane segment at 434 to 447 (GCAGGSQVIFTNPL) threads the bilayer. Residues 448–482 (EIVKIRLQVAGEITTGPRVSALNVLRDLGIFGLYK) are Mitochondrial matrix-facing. The chain crosses the membrane as a helical span at residues 483 to 502 (GAKACFLRDIPFSAIYFPVY). At 503-521 (AHCKLLLADENGHVGGLNL) the chain is on the mitochondrial intermembrane side. Residues 522 to 539 (LAAGAMAGVPAASLVTPA) traverse the membrane as a helical segment. Over 540 to 578 (DVIKTRLQVAARAGQTTYSGVIDCFRKILREEGPSAFWK) the chain is Mitochondrial matrix. The helical transmembrane segment at 579-598 (GTAARVFRSSPQFGVTLVTY) threads the bilayer. The Mitochondrial intermembrane segment spans residues 599 to 678 (ELLQRWFYID…QPKAAVAATQ (80 aa)). The segment at 613–675 (KPAGSEPTPK…AVVQPKAAVA (63 aa)) is C-terminal domain.

This sequence belongs to the mitochondrial carrier (TC 2.A.29) family. As to quaternary structure, homodimer (via N-terminus). In terms of tissue distribution, expressed predominantly in the heart and skeletal muscle, weakly in brain and kidney.

The protein resides in the mitochondrion inner membrane. The enzyme catalyses L-aspartate(in) + L-glutamate(out) + H(+)(out) = L-aspartate(out) + L-glutamate(in) + H(+)(in). It carries out the reaction 3-sulfino-L-alanine(out) + L-glutamate(in) + H(+)(in) = 3-sulfino-L-alanine(in) + L-glutamate(out) + H(+)(out). The catalysed reaction is 3-sulfino-L-alanine(out) + L-aspartate(in) = 3-sulfino-L-alanine(in) + L-aspartate(out). Activated by calcium-binding in the mitochondrial intermembrane space. Inhibited by pyridoxal 5'-phosphate, bathophenathroline, mercurials, diethyl pyrocarbonate and N-ethylmaleimide. Functionally, mitochondrial electrogenic aspartate/glutamate antiporter that favors efflux of aspartate and entry of glutamate and proton within the mitochondria as part of the malate-aspartate shuttle. Also mediates the uptake of L-cysteinesulfinate (3-sulfino-L-alanine) by mitochondria in exchange of L-glutamate and proton. Can also exchange L-cysteinesulfinate with aspartate in their anionic form without any proton translocation. Lacks transport activity towards L-glutamine or gamma-aminobutyric acid (GABA). In Homo sapiens (Human), this protein is Electrogenic aspartate/glutamate antiporter SLC25A12, mitochondrial.